We begin with the raw amino-acid sequence, 229 residues long: Uracil-DNA glycosylase (229 aa).

Asp67 functions as the Proton acceptor in the catalytic mechanism.

This sequence belongs to the uracil-DNA glycosylase (UDG) superfamily. UNG family.

The protein localises to the cytoplasm. It carries out the reaction Hydrolyzes single-stranded DNA or mismatched double-stranded DNA and polynucleotides, releasing free uracil.. Its function is as follows. Excises uracil residues from the DNA which can arise as a result of misincorporation of dUMP residues by DNA polymerase or due to deamination of cytosine. In Coxiella burnetii (strain CbuG_Q212) (Coxiella burnetii (strain Q212)), this protein is Uracil-DNA glycosylase.